A 117-amino-acid polypeptide reads, in one-letter code: Big defensin (117 aa).

Positions 1-23 (MKGNIGIAVFYMLLLLLPTDSIG) are cleaved as a signal peptide. The propeptide occupies 26–36 (MEEEQEKLFRQ). Intrachain disulfides connect Cys-83–Cys-113, Cys-90–Cys-108, and Cys-94–Cys-114.

Belongs to the big defensin family. As to quaternary structure, interacts with intracellular coagulation inhibitor 1/LICI-1. As to expression, expressed in all tissues examined, including hemocytes, heart, hepatopancreas, stomach, intestine and skeletal muscle.

It is found in the secreted. In terms of biological role, significantly inhibits the growth of Gram-negative and Gram-positive bacteria and fungi in vitro. The sequence is that of Big defensin from Tachypleus tridentatus (Japanese horseshoe crab).